Consider the following 245-residue polypeptide: tRNA pseudouridine synthase A (245 aa).

Catalysis depends on Asp52, which acts as the Nucleophile. A substrate-binding site is contributed by Tyr111.

It belongs to the tRNA pseudouridine synthase TruA family. As to quaternary structure, homodimer.

The catalysed reaction is uridine(38/39/40) in tRNA = pseudouridine(38/39/40) in tRNA. In terms of biological role, formation of pseudouridine at positions 38, 39 and 40 in the anticodon stem and loop of transfer RNAs. This is tRNA pseudouridine synthase A from Xanthobacter autotrophicus (strain ATCC BAA-1158 / Py2).